The sequence spans 405 residues: MALPRAMRPGGSHPNNFLFNTLPVIDNPVERQRAMAVFERESLRDAFEMLTPIAPSLKNAFLIFNEDGLLIHTSVGGEQVYIPIQTNNMESYSWKKAPPAVFLANVDGRRGLLDAFKAKTQTNVSKVVFEIENYSPSRILTQTVFSARDQTEEDTEMGSDAEGATQTVSSRLVKHEFNNYALMLPTRQPDVSMSLSKAQLNKILGVCKQAGDPITFQCLFDDTLQVRSGDRQVVFSVDYQHADNCGVESSSSLLEKMPMKTKKSAPEPIRGISGRRLFTLVLDEDTNFKQLIQKLKLKNAGAVLNFFLDPDSIPMIGLSTKQPFSVMMFFMCSYPTQPCQVGFSPAAFSSTPMGAGVKRRASEEEESDQPPKKLFPDGKLFKSNFVLLMDKTGAKIPCPEQPMHF.

The interval glycine 354–proline 376 is disordered. The Bipartite nuclear localization signal motif lies at lysine 358 to lysine 373.

Belongs to the herpesviridae DNA polymerase processivity factor family. In terms of assembly, interacts with the DNA polymerase catalytic subunit. Interacts with the origin-binding protein.

The protein localises to the host nucleus. Plays an essential role in viral DNA replication by acting as the polymerase accessory subunit. Associates with the viral polymerase to increase its processivity and forms high-affinity direct interactions with DNA. Facilitates the origin-binding protein loading onto DNA thus increasing its ability to assemble into a functional complex capable of unwinding duplex DNA. This is DNA polymerase processivity factor from Equine herpesvirus 1 (strain Ab4p) (EHV-1).